An 881-amino-acid polypeptide reads, in one-letter code: Glutamate--tRNA ligase (881 aa).

Residues 1 to 480 (MSVRVRLAPS…ILRFKKSIGQ (480 aa)) form a glutamyl-tRNA synthetase region. The 'HIGH' region motif lies at 9 to 19 (PSPTGNLHIGT). A 'KMSKS' region motif is present at residues 248-252 (KLSKR). Position 251 (K251) interacts with ATP. A unknown region spans residues 481-881 (EIEDTKIEDT…IKREIFGKPS (401 aa)). Over residues 488–502 (EDTKKAETTPHKSKG) the composition is skewed to basic and acidic residues. The disordered stretch occupies residues 488–747 (EDTKKAETTP…PTATDAETRE (260 aa)). Low complexity predominate over residues 522–548 (QTQTTKPPKKGQTATPVATTPTATDVT). The span at 549–562 (ENTSVGTQETQSQI) shows a compositional bias: polar residues. Over residues 563–576 (TTPVATTPTATDVT) the composition is skewed to low complexity. The span at 577–590 (ENTSVGTQETQSQI) shows a compositional bias: polar residues. Over residues 591 to 604 (TTPVATTPTATDVT) the composition is skewed to low complexity. Polar residues predominate over residues 605–618 (ENTSVETQETQSQI). The span at 619–632 (TTPVATTPTATDVT) shows a compositional bias: low complexity. A compositionally biased stretch (polar residues) spans 633–646 (ENTSVETQETQSQI). Low complexity predominate over residues 647-660 (TTPVATTPTATDVT). Over residues 661 to 674 (ENTSVGTQETQSQI) the composition is skewed to polar residues. Positions 675-688 (TTPVATTPTATDVT) are enriched in low complexity. Positions 689–702 (ENTSVETQETQSQI) are enriched in polar residues. Low complexity predominate over residues 703 to 720 (TTPVATTSTATDVTENTS). Residues 721–730 (VETQETQSQI) are compositionally biased toward polar residues. Positions 731 to 742 (TTPVATTPTATD) are enriched in low complexity. The next 2 helical transmembrane spans lie at 809-829 (LFGW…VIEA) and 832-852 (GIPI…VWFV).

It belongs to the class-I aminoacyl-tRNA synthetase family. Glutamate--tRNA ligase type 1 subfamily. As to quaternary structure, monomer.

It localises to the cytoplasm. It is found in the cell membrane. It carries out the reaction tRNA(Glu) + L-glutamate + ATP = L-glutamyl-tRNA(Glu) + AMP + diphosphate. Functionally, catalyzes the attachment of glutamate to tRNA(Glu) in a two-step reaction: glutamate is first activated by ATP to form Glu-AMP and then transferred to the acceptor end of tRNA(Glu). The polypeptide is Glutamate--tRNA ligase (gltX) (Trichodesmium erythraeum (strain IMS101)).